Here is a 111-residue protein sequence, read N- to C-terminus: Ig kappa chain V-III region CBPC 101 (111 aa).

Residues 1–23 (DIVLTQSPASLAVSLGQRATISC) form a framework-1 region. Residues Cys23 and Cys92 are joined by a disulfide bond. The interval 24–38 (KASQSVDYTGESYMN) is complementarity-determining-1. Residues 39-53 (WYQQNPGQSPKLLIY) are framework-2. The interval 54-60 (AASNLES) is complementarity-determining-2. The segment at 61 to 92 (GIPARFSGSGSGTDFTLNIHPVEEEDAATYYC) is framework-3. Residues 93 to 101 (QQSNEDPYT) are complementarity-determining-3. The framework-4 stretch occupies residues 102-111 (FGGGTKLEIK).

This Mus musculus (Mouse) protein is Ig kappa chain V-III region CBPC 101.